Consider the following 409-residue polypeptide: Serine/threonine transporter SstT (409 aa).

A run of 9 helical transmembrane segments spans residues 17-37 (LVVQIIVGLVAGLLLASFFPA), 49-69 (FVSALKAVAPVLVFVLVMASI), 83-103 (ILLLYLVGTFSAAVVAVIASF), 142-162 (ALISANFIGILAWAIGLGIAF), 180-200 (VSLIVKVVIRFAPLGIFGLVA), 218-238 (LVVLLGCMLFVAFVVNPLIVF), 299-319 (MAGAAITITVLTLAAVHTLGI), 331-351 (VVASVCACGASGVAGGSLLLI), and 357-377 (LFGIPSEVAMQVVAVGFIIAI).

Belongs to the dicarboxylate/amino acid:cation symporter (DAACS) (TC 2.A.23) family.

Its subcellular location is the cell inner membrane. It carries out the reaction L-serine(in) + Na(+)(in) = L-serine(out) + Na(+)(out). The enzyme catalyses L-threonine(in) + Na(+)(in) = L-threonine(out) + Na(+)(out). Involved in the import of serine and threonine into the cell, with the concomitant import of sodium (symport system). This Pseudomonas paraeruginosa (strain DSM 24068 / PA7) (Pseudomonas aeruginosa (strain PA7)) protein is Serine/threonine transporter SstT.